Consider the following 340-residue polypeptide: Insulin gene enhancer protein ISL-2B (340 aa).

LIM zinc-binding domains lie at 9–62 and 71–125; these read CVGC…CKRD and CAKC…RADH. The homeobox DNA-binding region spans 172-231; the sequence is TTRVRTVLNEKQLHTLRTCYNANPRPDALMKEQLVEMTGLSPRVIRVWFQNKRCKDKKRT. The segment covering 307 to 317 has biased composition (low complexity); it reads ESGSMGNSSGS. The segment at 307 to 340 is disordered; sequence ESGSMGNSSGSDVTSLSSQLPDTPNSMVPSPMDT. Residues 318 to 340 show a composition bias toward polar residues; it reads DVTSLSSQLPDTPNSMVPSPMDT.

The protein localises to the nucleus. Its function is as follows. Binds to one of the cis-acting domain of the insulin gene enhancer. May be involved in subtype specialization of primary motoneurons. The polypeptide is Insulin gene enhancer protein ISL-2B (isl2b) (Oncorhynchus tshawytscha (Chinook salmon)).